Reading from the N-terminus, the 239-residue chain is Host range factor p28 (239 aa).

One can recognise a KilA-N domain in the interval 21-131 (YIDEPNDIRL…QSILRGLVNW (111 aa)). The RING-type zinc-finger motif lies at 170–223 (CGICYEVVYSKRLENDRYFGLLDSCNHIFCITCINIWHKTRRETGASDNCPICR).

This sequence belongs to the orthopoxvirus OPG021 family.

Its subcellular location is the host cytoplasm. Its function is as follows. RING-finger E3 ubiquitin ligase which catalyzes the formation of both 'Lys-48'- and 'Lys-63'-linked polyubiquitin chains. Plays an important role in virulence by acting as an anti-apoptotic factor. The polypeptide is Host range factor p28 (OPG021) (Homo sapiens (Human)).